The following is a 121-amino-acid chain: ATP synthase epsilon chain (121 aa).

It belongs to the ATPase epsilon chain family. F-type ATPases have 2 components, CF(1) - the catalytic core - and CF(0) - the membrane proton channel. CF(1) has five subunits: alpha(3), beta(3), gamma(1), delta(1), epsilon(1). CF(0) has three main subunits: a, b and c.

The protein resides in the cell membrane. Functionally, produces ATP from ADP in the presence of a proton gradient across the membrane. The chain is ATP synthase epsilon chain from Mycolicibacterium vanbaalenii (strain DSM 7251 / JCM 13017 / BCRC 16820 / KCTC 9966 / NRRL B-24157 / PYR-1) (Mycobacterium vanbaalenii).